We begin with the raw amino-acid sequence, 139 residues long: D-ribose pyranase (139 aa).

His20 functions as the Proton donor in the catalytic mechanism. Residues Asp28, His106, and 128 to 130 (YAN) contribute to the substrate site.

Belongs to the RbsD / FucU family. RbsD subfamily. Homodecamer.

The protein localises to the cytoplasm. The enzyme catalyses beta-D-ribopyranose = beta-D-ribofuranose. It participates in carbohydrate metabolism; D-ribose degradation; D-ribose 5-phosphate from beta-D-ribopyranose: step 1/2. Catalyzes the interconversion of beta-pyran and beta-furan forms of D-ribose. This chain is D-ribose pyranase, found in Proteus mirabilis (strain HI4320).